Reading from the N-terminus, the 313-residue chain is Beta-ketoacyl-[acyl-carrier-protein] synthase III (313 aa).

Residues Cys-112 and His-238 contribute to the active site. An ACP-binding region spans residues 239 to 243 (QANIR). Asn-268 is an active-site residue.

It belongs to the thiolase-like superfamily. FabH family. In terms of assembly, homodimer.

It is found in the cytoplasm. It carries out the reaction malonyl-[ACP] + acetyl-CoA + H(+) = 3-oxobutanoyl-[ACP] + CO2 + CoA. It participates in lipid metabolism; fatty acid biosynthesis. In terms of biological role, catalyzes the condensation reaction of fatty acid synthesis by the addition to an acyl acceptor of two carbons from malonyl-ACP. Catalyzes the first condensation reaction which initiates fatty acid synthesis and may therefore play a role in governing the total rate of fatty acid production. Possesses both acetoacetyl-ACP synthase and acetyl transacylase activities. Its substrate specificity determines the biosynthesis of branched-chain and/or straight-chain of fatty acids. The polypeptide is Beta-ketoacyl-[acyl-carrier-protein] synthase III (Staphylococcus haemolyticus (strain JCSC1435)).